Here is a 58-residue protein sequence, read N- to C-terminus: MSESETEQTGEHASHRTGQTHECRRCGRNQGLVGKYDIYLCRQCFREVARDMGFKKYR.

A disordered region spans residues M1–H21. Residues T9–H21 are compositionally biased toward basic and acidic residues. Positions 23, 26, 41, and 44 each coordinate Zn(2+).

This sequence belongs to the universal ribosomal protein uS14 family. Zinc-binding uS14 subfamily. Part of the 30S ribosomal subunit. Requires Zn(2+) as cofactor.

Its function is as follows. Binds 16S rRNA, required for the assembly of 30S particles. This chain is Small ribosomal subunit protein uS14, found in Haloquadratum walsbyi (strain DSM 16790 / HBSQ001).